Reading from the N-terminus, the 448-residue chain is GTPase Der (448 aa).

2 EngA-type G domains span residues 2-171 (FTVV…PDTQ) and 181-364 (PKIA…EEYS). Residues 8–15 (GRPNVGKS), 58–62 (DTGGF), 123–126 (NKID), 187–194 (GRPNVGKS), 234–238 (DTAGI), and 305–308 (NKWD) contribute to the GTP site. The KH-like domain maps to 365–448 (KRVSTSELNR…PINIKIKQRK (84 aa)).

This sequence belongs to the TRAFAC class TrmE-Era-EngA-EngB-Septin-like GTPase superfamily. EngA (Der) GTPase family. In terms of assembly, associates with the 50S ribosomal subunit.

Functionally, GTPase that plays an essential role in the late steps of ribosome biogenesis. The sequence is that of GTPase Der from Thermodesulfovibrio yellowstonii (strain ATCC 51303 / DSM 11347 / YP87).